Reading from the N-terminus, the 246-residue chain is Eukaryotic translation initiation factor 6 (246 aa).

Phosphoserine; by CK1 is present on residues Ser174 and Ser175.

The protein belongs to the eIF-6 family. In terms of assembly, monomer. Associates with the 60S ribosomal subunit. In terms of processing, phosphorylation at Ser-174 and Ser-175 promotes nuclear export.

It is found in the cytoplasm. The protein localises to the nucleus. The protein resides in the nucleolus. Its function is as follows. Binds to the 60S ribosomal subunit and prevents its association with the 40S ribosomal subunit to form the 80S initiation complex in the cytoplasm. Is also involved in ribosome biogenesis. Associates with pre-60S subunits in the nucleus and is involved in its nuclear export. This Verticillium alfalfae (strain VaMs.102 / ATCC MYA-4576 / FGSC 10136) (Verticillium wilt of alfalfa) protein is Eukaryotic translation initiation factor 6.